The primary structure comprises 169 residues: Small ribosomal subunit protein bS16 (169 aa).

Residues 114–169 (AEGPTAEAITEKRRKAKEEAEAKAAAEAEAAEKAEAEAAEKAAAEAAEESEEASAE) are disordered. Residues 129 to 156 (AKEEAEAKAAAEAEAAEKAEAEAAEKAA) are compositionally biased toward basic and acidic residues. Residues 159–169 (AAEESEEASAE) are compositionally biased toward acidic residues.

It belongs to the bacterial ribosomal protein bS16 family.

This is Small ribosomal subunit protein bS16 from Corynebacterium urealyticum (strain ATCC 43042 / DSM 7109).